Consider the following 463-residue polypeptide: ATP-dependent protease ATPase subunit HslU (463 aa).

ATP contacts are provided by residues V21, G63 to E68, D276, E341, and R413.

It belongs to the ClpX chaperone family. HslU subfamily. As to quaternary structure, a double ring-shaped homohexamer of HslV is capped on each side by a ring-shaped HslU homohexamer. The assembly of the HslU/HslV complex is dependent on binding of ATP.

It is found in the cytoplasm. ATPase subunit of a proteasome-like degradation complex; this subunit has chaperone activity. The binding of ATP and its subsequent hydrolysis by HslU are essential for unfolding of protein substrates subsequently hydrolyzed by HslV. HslU recognizes the N-terminal part of its protein substrates and unfolds these before they are guided to HslV for hydrolysis. The polypeptide is ATP-dependent protease ATPase subunit HslU (Thermotoga sp. (strain RQ2)).